The chain runs to 147 residues: Large ribosomal subunit protein uL15 (147 aa).

Positions 1–62 (MDLNTLKPAL…GQMPLQRRLP (62 aa)) are disordered. Residues 30-39 (TATKGHKGQK) are compositionally biased toward basic residues.

It belongs to the universal ribosomal protein uL15 family. In terms of assembly, part of the 50S ribosomal subunit.

In terms of biological role, binds to the 23S rRNA. In Pelobacter propionicus (strain DSM 2379 / NBRC 103807 / OttBd1), this protein is Large ribosomal subunit protein uL15.